The primary structure comprises 204 residues: Glycerol-3-phosphate acyltransferase (204 aa).

The next 5 membrane-spanning stretches (helical) occupy residues 6–26 (YIII…YIVA), 80–100 (LVGI…VAGH), 122–142 (LAVN…VVAI), 144–164 (KYVS…MIMV), and 168–188 (AGLI…RANI).

Belongs to the PlsY family. As to quaternary structure, probably interacts with PlsX.

It localises to the cell membrane. It carries out the reaction an acyl phosphate + sn-glycerol 3-phosphate = a 1-acyl-sn-glycero-3-phosphate + phosphate. It functions in the pathway lipid metabolism; phospholipid metabolism. Catalyzes the transfer of an acyl group from acyl-phosphate (acyl-PO(4)) to glycerol-3-phosphate (G3P) to form lysophosphatidic acid (LPA). This enzyme utilizes acyl-phosphate as fatty acyl donor, but not acyl-CoA or acyl-ACP. The chain is Glycerol-3-phosphate acyltransferase from Clostridioides difficile (strain 630) (Peptoclostridium difficile).